Here is a 385-residue protein sequence, read N- to C-terminus: 1-deoxy-D-xylulose 5-phosphate reductoisomerase (385 aa).

The NADPH site is built by Thr10, Gly11, Ser12, Ile13, Gly36, Asn38, and Asn122. Position 123 (Lys123) interacts with 1-deoxy-D-xylulose 5-phosphate. NADPH is bound at residue Glu124. A Mn(2+)-binding site is contributed by Asp148. 1-deoxy-D-xylulose 5-phosphate contacts are provided by Ser149, Glu150, Ser174, and His197. Residue Glu150 participates in Mn(2+) binding. Residue Gly203 coordinates NADPH. The 1-deoxy-D-xylulose 5-phosphate site is built by Ser210, Asn215, Lys216, and Glu219. Glu219 provides a ligand contact to Mn(2+).

This sequence belongs to the DXR family. Mg(2+) is required as a cofactor. Requires Mn(2+) as cofactor.

It carries out the reaction 2-C-methyl-D-erythritol 4-phosphate + NADP(+) = 1-deoxy-D-xylulose 5-phosphate + NADPH + H(+). It functions in the pathway isoprenoid biosynthesis; isopentenyl diphosphate biosynthesis via DXP pathway; isopentenyl diphosphate from 1-deoxy-D-xylulose 5-phosphate: step 1/6. Catalyzes the NADPH-dependent rearrangement and reduction of 1-deoxy-D-xylulose-5-phosphate (DXP) to 2-C-methyl-D-erythritol 4-phosphate (MEP). In Geobacter sp. (strain M21), this protein is 1-deoxy-D-xylulose 5-phosphate reductoisomerase.